The sequence spans 392 residues: Chaperone protein DnaJ (392 aa).

The J domain occupies 2 to 67; the sequence is DYYDVLGVSK…QKRESYDRYG (66 aa). Residues 149-227 form a CR-type zinc finger; it reads GVEKELLVSG…CRGQGRIKDK (79 aa). 8 residues coordinate Zn(2+): Cys162, Cys165, Cys179, Cys182, Cys201, Cys204, Cys215, and Cys218. 4 CXXCXGXG motif repeats span residues 162 to 169, 179 to 186, 201 to 208, and 215 to 222; these read CETCLGSG, CDRCKGSG, CPECGGEG, and CSNCRGQG.

Belongs to the DnaJ family. In terms of assembly, homodimer. It depends on Zn(2+) as a cofactor.

Its subcellular location is the cytoplasm. Its function is as follows. Participates actively in the response to hyperosmotic and heat shock by preventing the aggregation of stress-denatured proteins and by disaggregating proteins, also in an autonomous, DnaK-independent fashion. Unfolded proteins bind initially to DnaJ; upon interaction with the DnaJ-bound protein, DnaK hydrolyzes its bound ATP, resulting in the formation of a stable complex. GrpE releases ADP from DnaK; ATP binding to DnaK triggers the release of the substrate protein, thus completing the reaction cycle. Several rounds of ATP-dependent interactions between DnaJ, DnaK and GrpE are required for fully efficient folding. Also involved, together with DnaK and GrpE, in the DNA replication of plasmids through activation of initiation proteins. The chain is Chaperone protein DnaJ from Chlamydia caviae (strain ATCC VR-813 / DSM 19441 / 03DC25 / GPIC) (Chlamydophila caviae).